A 307-amino-acid chain; its full sequence is Nucleotide-binding protein AAur_2084 (307 aa).

The segment at 1 to 21 (MDEATAKSGTEQDGLTPVKPP) is disordered. Residue 30–37 (GMSGAGRS) participates in ATP binding. 81-84 (DVRS) provides a ligand contact to GTP.

Belongs to the RapZ-like family.

Its function is as follows. Displays ATPase and GTPase activities. The protein is Nucleotide-binding protein AAur_2084 of Paenarthrobacter aurescens (strain TC1).